The primary structure comprises 588 residues: Putative ABC transporter ATP-binding protein PAM_020 (588 aa).

2 ABC transporter domains span residues 6–247 (IIFK…GIQE) and 317–551 (LQLQ…TSLN). ATP is bound by residues 40-47 (GKNGSGKS) and 351-358 (GKNGSGKS).

The protein belongs to the ABC transporter superfamily.

It localises to the cell membrane. In terms of biological role, probably part of an ABC transporter complex. Responsible for energy coupling to the transport system. The polypeptide is Putative ABC transporter ATP-binding protein PAM_020 (Onion yellows phytoplasma (strain OY-M)).